Reading from the N-terminus, the 843-residue chain is Protein P (843 aa).

Residues 1–177 form a terminal protein domain (TP) region; that stretch reads MPLSYQHFRK…FCGSPYSWEQ (177 aa). The segment at 178–346 is spacer; sequence DLQHGRLVIQ…YCLCHIVNLI (169 aa). Disordered regions lie at residues 219–258 and 297–316; these read RKSR…VGVE and SSGH…RSQS. The interval 347–690 is polymerase/reverse transcriptase domain (RT); that stretch reads DDWGPCAEHG…YLNLYPVARQ (344 aa). Residues 357–600 form the Reverse transcriptase domain; that stretch reads EHRIRTPRTP…YSLNFMGYVI (244 aa). The Mg(2+) site is built by Asp429, Asp551, and Asp552.

This sequence belongs to the hepadnaviridae P protein family.

The enzyme catalyses DNA(n) + a 2'-deoxyribonucleoside 5'-triphosphate = DNA(n+1) + diphosphate. It carries out the reaction Endonucleolytic cleavage to 5'-phosphomonoester.. With respect to regulation, activated by host HSP70 and HSP40 in vitro to be able to bind the epsilon loop of the pgRNA. Because deletion of the RNase H region renders the protein partly chaperone-independent, the chaperones may be needed indirectly to relieve occlusion of the RNA-binding site by this domain. Inhibited by several reverse-transcriptase inhibitors: Lamivudine, Adefovir and Entecavir. Its function is as follows. Multifunctional enzyme that converts the viral RNA genome into dsDNA in viral cytoplasmic capsids. This enzyme displays a DNA polymerase activity that can copy either DNA or RNA templates, and a ribonuclease H (RNase H) activity that cleaves the RNA strand of RNA-DNA heteroduplexes in a partially processive 3'- to 5'-endonucleasic mode. Neo-synthesized pregenomic RNA (pgRNA) are encapsidated together with the P protein, and reverse-transcribed inside the nucleocapsid. Initiation of reverse-transcription occurs first by binding the epsilon loop on the pgRNA genome, and is initiated by protein priming, thereby the 5'-end of (-)DNA is covalently linked to P protein. Partial (+)DNA is synthesized from the (-)DNA template and generates the relaxed circular DNA (RC-DNA) genome. After budding and infection, the RC-DNA migrates in the nucleus, and is converted into a plasmid-like covalently closed circular DNA (cccDNA). The activity of P protein does not seem to be necessary for cccDNA generation, and is presumably released from (+)DNA by host nuclear DNA repair machinery. The polypeptide is Protein P (Hepatitis B virus genotype B1 (isolate Japan/Ry30/2002) (HBV-B)).